The chain runs to 95 residues: Small ribosomal subunit protein bS6 (95 aa).

It belongs to the bacterial ribosomal protein bS6 family.

Functionally, binds together with bS18 to 16S ribosomal RNA. The polypeptide is Small ribosomal subunit protein bS6 (Rhodococcus jostii (strain RHA1)).